Here is a 406-residue protein sequence, read N- to C-terminus: Cysteine desulfurase (406 aa).

Lys226 bears the N6-(pyridoxal phosphate)lysine mark. Residue Cys364 is the Cysteine persulfide intermediate of the active site.

It belongs to the class-V pyridoxal-phosphate-dependent aminotransferase family. Csd subfamily. Homodimer. Interacts with SufE and the SufBCD complex composed of SufB, SufC and SufD. The interaction with SufE is required to mediate the direct transfer of the sulfur atom from the S-sulfanylcysteine. Pyridoxal 5'-phosphate is required as a cofactor.

It localises to the cytoplasm. The catalysed reaction is (sulfur carrier)-H + L-cysteine = (sulfur carrier)-SH + L-alanine. It catalyses the reaction L-selenocysteine + AH2 = hydrogenselenide + L-alanine + A + H(+). It participates in cofactor biosynthesis; iron-sulfur cluster biosynthesis. Its function is as follows. Cysteine desulfurases mobilize the sulfur from L-cysteine to yield L-alanine, an essential step in sulfur metabolism for biosynthesis of a variety of sulfur-containing biomolecules. Component of the suf operon, which is activated and required under specific conditions such as oxidative stress and iron limitation. Acts as a potent selenocysteine lyase in vitro, that mobilizes selenium from L-selenocysteine. Selenocysteine lyase activity is however unsure in vivo. This chain is Cysteine desulfurase, found in Klebsiella pneumoniae (strain 342).